A 115-amino-acid chain; its full sequence is Guanylin (115 aa).

A signal peptide spans Met-1–Gly-21. The propeptide occupies Val-22–Asp-100. Cystine bridges form between Cys-69-Cys-82, Cys-104-Cys-112, and Cys-107-Cys-115.

The protein belongs to the guanylin family.

The protein resides in the secreted. Endogenous activator of intestinal guanylate cyclase. It stimulates this enzyme through the same receptor binding region as the heat-stable enterotoxins. The sequence is that of Guanylin (GUCA2A) from Notomys alexis (Spinifex hopping mouse).